The following is a 521-amino-acid chain: Maturase K (521 aa).

It belongs to the intron maturase 2 family. MatK subfamily.

The protein localises to the plastid. The protein resides in the chloroplast. Its function is as follows. Usually encoded in the trnK tRNA gene intron. Probably assists in splicing its own and other chloroplast group II introns. In Kniphofia uvaria (Red-hot poker), this protein is Maturase K.